A 130-amino-acid chain; its full sequence is Organ-specific protein P4 (130 aa).

A run of 2 repeats spans residues 60-85 (HAKE…DNEI) and 86-111 (HANE…DNEI). The tract at residues 60–111 (HAKENKGAIGEFEPCPNASAYGDNEIHANENKGAIGEFETRPNGSAYGDNEI) is 2 X 26 AA tandem repeats. The segment at 79-130 (AYGDNEIHANENKGAIGEFETRPNGSAYGDNEIGAEFTDDFEPRPSMTKYNA) is disordered.

To organ specific protein S2. As to expression, expressed in pods.

In Pisum sativum (Garden pea), this protein is Organ-specific protein P4.